A 172-amino-acid chain; its full sequence is uncharacterized protein (172 aa).

This is an uncharacterized protein from Macaca mulatta (Rhesus macaque).